Consider the following 693-residue polypeptide: Elongation factor G (693 aa).

The region spanning 8–282 is the tr-type G domain; it reads EKTRNIGIMA…AVIDYLPSPL (275 aa). Residues 17–24, 81–85, and 135–138 contribute to the GTP site; these read AHVDAGKT, DTPGH, and NKMD.

The protein belongs to the TRAFAC class translation factor GTPase superfamily. Classic translation factor GTPase family. EF-G/EF-2 subfamily.

It localises to the cytoplasm. Its function is as follows. Catalyzes the GTP-dependent ribosomal translocation step during translation elongation. During this step, the ribosome changes from the pre-translocational (PRE) to the post-translocational (POST) state as the newly formed A-site-bound peptidyl-tRNA and P-site-bound deacylated tRNA move to the P and E sites, respectively. Catalyzes the coordinated movement of the two tRNA molecules, the mRNA and conformational changes in the ribosome. The sequence is that of Elongation factor G from Streptococcus gordonii (strain Challis / ATCC 35105 / BCRC 15272 / CH1 / DL1 / V288).